The chain runs to 236 residues: Phosphoribosylaminoimidazole-succinocarboxamide synthase (236 aa).

This sequence belongs to the SAICAR synthetase family.

The catalysed reaction is 5-amino-1-(5-phospho-D-ribosyl)imidazole-4-carboxylate + L-aspartate + ATP = (2S)-2-[5-amino-1-(5-phospho-beta-D-ribosyl)imidazole-4-carboxamido]succinate + ADP + phosphate + 2 H(+). It participates in purine metabolism; IMP biosynthesis via de novo pathway; 5-amino-1-(5-phospho-D-ribosyl)imidazole-4-carboxamide from 5-amino-1-(5-phospho-D-ribosyl)imidazole-4-carboxylate: step 1/2. The polypeptide is Phosphoribosylaminoimidazole-succinocarboxamide synthase (Pseudomonas entomophila (strain L48)).